The following is a 46-amino-acid chain: Large ribosomal subunit protein bL34 (46 aa).

Belongs to the bacterial ribosomal protein bL34 family.

The sequence is that of Large ribosomal subunit protein bL34 (rpmH) from Mycobacterium avium.